Here is a 166-residue protein sequence, read N- to C-terminus: RING-H2 finger protein ATL79 (166 aa).

A signal peptide spans 1 to 16 (MRLLVAEAASPLSSAA). A helical transmembrane segment spans residues 41–61 (SVLLILVISALICALSLYAAI). The tract at residues 71-90 (TEDDHKPDPEAAASSTPTTP) is disordered. The segment covering 81–90 (AAASSTPTTP) has biased composition (low complexity). An RING-type; atypical zinc finger spans residues 107–149 (CAICLSEFEQGESIQVLEKCQHGFHVKCIHKWLSTRSSCPTCR).

The protein belongs to the RING-type zinc finger family. ATL subfamily.

It localises to the membrane. The catalysed reaction is S-ubiquitinyl-[E2 ubiquitin-conjugating enzyme]-L-cysteine + [acceptor protein]-L-lysine = [E2 ubiquitin-conjugating enzyme]-L-cysteine + N(6)-ubiquitinyl-[acceptor protein]-L-lysine.. The protein operates within protein modification; protein ubiquitination. In Arabidopsis thaliana (Mouse-ear cress), this protein is RING-H2 finger protein ATL79 (ATL79).